Here is a 290-residue protein sequence, read N- to C-terminus: Phosphatidylglycerol--prolipoprotein diacylglyceryl transferase (290 aa).

7 helical membrane-spanning segments follow: residues 21 to 41, 60 to 80, 96 to 116, 130 to 150, 198 to 218, 225 to 245, and 258 to 278; these read VSLH…MWLA, LLYA…VLFY, WDGG…MFWF, FIAP…FING, SQLY…NLFI, GAVS…VEAF, and VISM…IMMI. Arg143 contacts a 1,2-diacyl-sn-glycero-3-phospho-(1'-sn-glycerol).

It belongs to the Lgt family.

It is found in the cell inner membrane. The catalysed reaction is L-cysteinyl-[prolipoprotein] + a 1,2-diacyl-sn-glycero-3-phospho-(1'-sn-glycerol) = an S-1,2-diacyl-sn-glyceryl-L-cysteinyl-[prolipoprotein] + sn-glycerol 1-phosphate + H(+). The protein operates within protein modification; lipoprotein biosynthesis (diacylglyceryl transfer). Its function is as follows. Catalyzes the transfer of the diacylglyceryl group from phosphatidylglycerol to the sulfhydryl group of the N-terminal cysteine of a prolipoprotein, the first step in the formation of mature lipoproteins. In Serratia proteamaculans (strain 568), this protein is Phosphatidylglycerol--prolipoprotein diacylglyceryl transferase.